The primary structure comprises 592 residues: Guanylate-binding protein 1 (592 aa).

The interval Met1–Cys311 is GTPase domain (Globular). In terms of domain architecture, GB1/RHD3-type G spans Thr35–Lys278. GTP-binding positions include Gly45–Ser52, Leu67–Ser69, and Asp97–Leu101. Ser156 bears the Phosphoserine mark. Residue Cys589 is modified to Cysteine methyl ester. Residue Cys589 is the site of S-farnesyl cysteine attachment. Phosphothreonine is present on Thr590. Positions Thr590–Ser592 are cleaved as a propeptide — removed in mature form.

Belongs to the TRAFAC class dynamin-like GTPase superfamily. GB1/RHD3 GTPase family. GB1 subfamily. In terms of assembly, homodimer; homodimerization occurs upon GTP-binding and is required for the second hydrolysis step from GDP to GMP. Undergoes conformational changes and oligomerization upon GTP-binding and hydrolysis. Heterodimer with other family members, including GBP2, GBP3, GBP4 and GBP5. Dimerization regulates subcellular location to membranous structures. Interacts with SQSTM1. Interacts (when phosphorylated) with 14-3-3 protein sigma (SFN); leading to GBP1 retention in the cytosol and inactivation. In terms of processing, isoprenylation is required for proper subcellular location. Phosphorylated at Ser-156 by PIM1 in absence of infection, inhibits GBP1: phosphorylation promotes interaction with 14-3-3 protein sigma (SFN), leading to GBP1 retention in the cytosol. Dephosphorylated in response to infection, liberating GBP1.

The protein localises to the cytoplasmic vesicle membrane. It is found in the golgi apparatus membrane. Its subcellular location is the cell membrane. The protein resides in the cytoplasm. It localises to the cytosol. The protein localises to the secreted. The catalysed reaction is GTP + H2O = GDP + phosphate + H(+). The enzyme catalyses GDP + H2O = GMP + phosphate + H(+). In terms of biological role, interferon (IFN)-inducible GTPase that plays important roles in innate immunity against a diverse range of bacterial, viral and protozoan pathogens. Hydrolyzes GTP to GMP in two consecutive cleavage reactions: GTP is first hydrolyzed to GDP and then to GMP in a processive manner. Following infection, recruited to the pathogen-containing vacuoles or vacuole-escaped bacteria and promotes both inflammasome assembly and autophagy. Acts as a positive regulator of inflammasome assembly by facilitating the detection of inflammasome ligands from pathogens. Involved in the lysis of pathogen-containing vacuoles, releasing pathogens into the cytosol. Following pathogen release in the cytosol, forms a protein coat in a GTPase-dependent manner that encapsulates pathogens and promotes the detection of ligands by pattern recognition receptors. Plays a key role in inflammasome assembly in response to infection by Gram-negative bacteria: following pathogen release in the cytosol, forms a protein coat that encapsulates Gram-negative bacteria and directly binds to lipopolysaccharide (LPS), disrupting the O-antigen barrier and unmasking lipid A that is that detected by the non-canonical inflammasome effector CASP4/CASP11. Also promotes recruitment of proteins that mediate bacterial cytolysis, leading to release double-stranded DNA (dsDNA) that activates the AIM2 inflammasome. Involved in autophagy by regulating bacteriolytic peptide generation via its interaction with ubiquitin-binding protein SQSTM1, which delivers monoubiquitinated proteins to autolysosomes for the generation of bacteriolytic peptides. Confers protection to several pathogens, including the bacterial pathogens L.monocytogenes and M.bovis BCG as well as the protozoan pathogen T.gondii. Exhibits antiviral activity against influenza virus. The chain is Guanylate-binding protein 1 (GBP1) from Pongo abelii (Sumatran orangutan).